The sequence spans 254 residues: Phosphoribosylaminoimidazole-succinocarboxamide synthase (254 aa).

Belongs to the SAICAR synthetase family.

The enzyme catalyses 5-amino-1-(5-phospho-D-ribosyl)imidazole-4-carboxylate + L-aspartate + ATP = (2S)-2-[5-amino-1-(5-phospho-beta-D-ribosyl)imidazole-4-carboxamido]succinate + ADP + phosphate + 2 H(+). It functions in the pathway purine metabolism; IMP biosynthesis via de novo pathway; 5-amino-1-(5-phospho-D-ribosyl)imidazole-4-carboxamide from 5-amino-1-(5-phospho-D-ribosyl)imidazole-4-carboxylate: step 1/2. In Brucella abortus (strain S19), this protein is Phosphoribosylaminoimidazole-succinocarboxamide synthase.